The following is a 126-amino-acid chain: Aspartate 1-decarboxylase (126 aa).

The Schiff-base intermediate with substrate; via pyruvic acid role is filled by Ser25. Pyruvic acid (Ser) is present on Ser25. Thr57 is a binding site for substrate. Residue Tyr58 is the Proton donor of the active site. Gly73–Ala75 provides a ligand contact to substrate.

This sequence belongs to the PanD family. Heterooctamer of four alpha and four beta subunits. The cofactor is pyruvate. In terms of processing, is synthesized initially as an inactive proenzyme, which is activated by self-cleavage at a specific serine bond to produce a beta-subunit with a hydroxyl group at its C-terminus and an alpha-subunit with a pyruvoyl group at its N-terminus.

It is found in the cytoplasm. It catalyses the reaction L-aspartate + H(+) = beta-alanine + CO2. Its pathway is cofactor biosynthesis; (R)-pantothenate biosynthesis; beta-alanine from L-aspartate: step 1/1. Functionally, catalyzes the pyruvoyl-dependent decarboxylation of aspartate to produce beta-alanine. The protein is Aspartate 1-decarboxylase of Cronobacter sakazakii (strain ATCC BAA-894) (Enterobacter sakazakii).